Here is a 410-residue protein sequence, read N- to C-terminus: Peptidase T-like protein YPO1009/y3403/YP_3421 (410 aa).

His-82 lines the Zn(2+) pocket. Asp-84 is an active-site residue. Asp-144 serves as a coordination point for Zn(2+). Glu-176 functions as the Proton acceptor in the catalytic mechanism. Residues Glu-177, Asp-200, and His-382 each coordinate Zn(2+).

The protein belongs to the peptidase M20B family. Zn(2+) is required as a cofactor.

The chain is Peptidase T-like protein YPO1009/y3403/YP_3421 from Yersinia pestis.